The chain runs to 152 residues: SsrA-binding protein (152 aa).

It belongs to the SmpB family.

The protein resides in the cytoplasm. Required for rescue of stalled ribosomes mediated by trans-translation. Binds to transfer-messenger RNA (tmRNA), required for stable association of tmRNA with ribosomes. tmRNA and SmpB together mimic tRNA shape, replacing the anticodon stem-loop with SmpB. tmRNA is encoded by the ssrA gene; the 2 termini fold to resemble tRNA(Ala) and it encodes a 'tag peptide', a short internal open reading frame. During trans-translation Ala-aminoacylated tmRNA acts like a tRNA, entering the A-site of stalled ribosomes, displacing the stalled mRNA. The ribosome then switches to translate the ORF on the tmRNA; the nascent peptide is terminated with the 'tag peptide' encoded by the tmRNA and targeted for degradation. The ribosome is freed to recommence translation, which seems to be the essential function of trans-translation. The sequence is that of SsrA-binding protein from Rickettsia conorii (strain ATCC VR-613 / Malish 7).